The chain runs to 350 residues: UDP-3-O-acylglucosamine N-acyltransferase (350 aa).

His257 functions as the Proton acceptor in the catalytic mechanism.

The protein belongs to the transferase hexapeptide repeat family. LpxD subfamily. As to quaternary structure, homotrimer.

It catalyses the reaction a UDP-3-O-[(3R)-3-hydroxyacyl]-alpha-D-glucosamine + a (3R)-hydroxyacyl-[ACP] = a UDP-2-N,3-O-bis[(3R)-3-hydroxyacyl]-alpha-D-glucosamine + holo-[ACP] + H(+). It functions in the pathway bacterial outer membrane biogenesis; LPS lipid A biosynthesis. In terms of biological role, catalyzes the N-acylation of UDP-3-O-acylglucosamine using 3-hydroxyacyl-ACP as the acyl donor. Is involved in the biosynthesis of lipid A, a phosphorylated glycolipid that anchors the lipopolysaccharide to the outer membrane of the cell. In Chelativorans sp. (strain BNC1), this protein is UDP-3-O-acylglucosamine N-acyltransferase.